A 305-amino-acid polypeptide reads, in one-letter code: DNA-directed RNA polymerase 35 kDa subunit (305 aa).

This sequence belongs to the poxviridae DNA-directed RNA polymerase 35 kDa subunit family. In terms of assembly, the DNA-dependent RNA polymerase used for intermediate and late genes expression consists of eight subunits 147 kDa, 133 kDa, 35 kDa, 30 kDa, 22 kDa, 19 kDa, 18 kDa and 7 kDa totalling more than 500 kDa in mass. The same holoenzyme, with the addition of the transcription-specificity factor RAP94, is used for early gene expression.

It is found in the virion. It carries out the reaction RNA(n) + a ribonucleoside 5'-triphosphate = RNA(n+1) + diphosphate. Functionally, part of the DNA-dependent RNA polymerase which catalyzes the transcription of viral DNA into RNA using the four ribonucleoside triphosphates as substrates. Responsible for the transcription of early, intermediate and late genes. DNA-dependent RNA polymerase associates with the early transcription factor (ETF), itself composed of D6 and A7, thereby allowing the early genes transcription. Late transcription, and probably also intermediate transcription, require newly synthesized RNA polymerase. The sequence is that of DNA-directed RNA polymerase 35 kDa subunit (OPG156) from Cynomys gunnisoni (Gunnison's prairie dog).